A 537-amino-acid chain; its full sequence is Zinc finger protein 703 (537 aa).

3 disordered regions span residues 1 to 38 (MNCS…LRQA), 90 to 254 (SQIG…VAPV), and 300 to 323 (VGNQ…LTGA). Polar residues predominate over residues 101–111 (SKLNSVTSSGL). Low complexity predominate over residues 149 to 158 (GSSSGGAADK). Positions 176 to 185 (SPSSRVSSPG) are enriched in polar residues. The segment covering 188–203 (CDSKNNESQEKKEPEA) has biased composition (basic and acidic residues). The span at 205-220 (KANSETSQVNPTLTRA) shows a compositional bias: polar residues. Low complexity predominate over residues 221-232 (STSNSSAESSQS). The C2H2-type zinc finger occupies 409-437 (HICNWVSASGPCDKRFSTSEELLAHLRTH).

Belongs to the Elbow/Noc family.

It localises to the nucleus. The protein localises to the cytoplasm. Functionally, transcriptional corepressor which does not bind directly to DNA and may regulate transcription through recruitment of histone deacetylases to gene promoters. Regulates cell adhesion, migration and proliferation. Involved in specification of the lateral neural plate border (NPB). May be required for segmental gene expression during hindbrain development. The polypeptide is Zinc finger protein 703 (znf703) (Xenopus tropicalis (Western clawed frog)).